A 225-amino-acid polypeptide reads, in one-letter code: UPF0173 metal-dependent hydrolase Pisl_0803 (225 aa).

Belongs to the UPF0173 family.

This Pyrobaculum islandicum (strain DSM 4184 / JCM 9189 / GEO3) protein is UPF0173 metal-dependent hydrolase Pisl_0803.